Consider the following 505-residue polypeptide: Glycerol kinase (505 aa).

Thr-12 is an ADP binding site. Residues Thr-12, Thr-13, and Ser-14 each contribute to the ATP site. Sn-glycerol 3-phosphate is bound at residue Thr-12. Arg-16 serves as a coordination point for ADP. Sn-glycerol 3-phosphate-binding residues include Arg-82, Glu-83, Tyr-134, and Asp-249. 5 residues coordinate glycerol: Arg-82, Glu-83, Tyr-134, Asp-249, and Gln-250. Residues Thr-271 and Gly-315 each coordinate ADP. Residues Thr-271, Gly-315, Gln-319, and Gly-416 each contribute to the ATP site. ADP is bound by residues Gly-416 and Asn-420.

This sequence belongs to the FGGY kinase family.

It catalyses the reaction glycerol + ATP = sn-glycerol 3-phosphate + ADP + H(+). It functions in the pathway polyol metabolism; glycerol degradation via glycerol kinase pathway; sn-glycerol 3-phosphate from glycerol: step 1/1. Inhibited by fructose 1,6-bisphosphate (FBP). Functionally, key enzyme in the regulation of glycerol uptake and metabolism. Catalyzes the phosphorylation of glycerol to yield sn-glycerol 3-phosphate. The sequence is that of Glycerol kinase from Mycolicibacterium vanbaalenii (strain DSM 7251 / JCM 13017 / BCRC 16820 / KCTC 9966 / NRRL B-24157 / PYR-1) (Mycobacterium vanbaalenii).